A 167-amino-acid chain; its full sequence is UPF0179 protein Pars_2336 (167 aa).

Belongs to the UPF0179 family.

This Pyrobaculum arsenaticum (strain DSM 13514 / JCM 11321 / PZ6) protein is UPF0179 protein Pars_2336.